A 226-amino-acid polypeptide reads, in one-letter code: UPF0758 protein PsycPRwf_0491 (226 aa).

The region spanning 102–224 (SLNRSQVVKD…TLSFAETATA (123 aa)) is the MPN domain. Residues histidine 173, histidine 175, and aspartate 186 each contribute to the Zn(2+) site. Positions 173 to 186 (HNHPNQDATPSAAD) match the JAMM motif motif.

It belongs to the UPF0758 family.

The sequence is that of UPF0758 protein PsycPRwf_0491 from Psychrobacter sp. (strain PRwf-1).